The sequence spans 307 residues: Plastid division protein PDV2 (307 aa).

M1 carries the post-translational modification N-acetylmethionine. Residues 1 to 213 (MEDEEGIGLI…SGGSSHGVIR (213 aa)) are Cytoplasmic-facing. The tract at residues 28–66 (SSTTVSDNGDGNEDLSPGEGRKSEIIGNQDKDFDSISSE) is disordered. Residues 46 to 61 (EGRKSEIIGNQDKDFD) are compositionally biased toward basic and acidic residues. S50 carries the phosphoserine modification. Residues 76–103 (LLRIRDALEALESQLASLQNLRQRQQYE) are a coiled coil. Residues 174–206 (HLPSKKKSDANGFGSGHVRNEAEAKSPNGGSGG) are disordered. A helical membrane pass occupies residues 214–234 (FLGSVAKIVLPIIGVISLLSA). Topologically, residues 235–307 (SGYGPEMRKR…AKRDVTYGYG (73 aa)) are chloroplast intermembrane. Residues 235-307 (SGYGPEMRKR…AKRDVTYGYG (73 aa)) form an ARC6 binding region.

In terms of assembly, interacts (via C-terminus) with ARC6 (via C-terminus) in the chloroplast intermembrane space; this interaction induces ARC6 homodimerization and leads to the formation of a heterotetramer containing two ARC6 and two PDV2 subunits. Interacts with ARC5/DRP5B. As to expression, mostly expressed in young leaves.

The protein resides in the plastid. It is found in the chloroplast outer membrane. Component of the plastid division machinery consisting in a binary fission accomplished by the simultaneous constriction of the FtsZ ring on the stromal side of the inner envelope membrane, and the ARC5/DRP5B ring on the cytosolic side of the outer envelope membrane. Positive factor of chloroplast division required, with a dosage effect, to mediate the recruitment and dimerization of ARC5/DRP5B at the midplastid constriction site in the cytoplasm at plastid outer envelope membranes (OEMs). Prevents ARC5/DRP5B GTPase acrivity. Relays plastid division site position between stroma and outer surface via interactions with the cytoplasmic ARC5/DRP5B and the inner membrane ARC6 that recruits stromal FtsZ ring. Binding to phosphatidylinositol 4-phosphate (PI4P) modulates negatively chloroplast division. This is Plastid division protein PDV2 from Arabidopsis thaliana (Mouse-ear cress).